The chain runs to 404 residues: D-galactonate dehydratase family member Ent638_1932 (404 aa).

Substrate-binding residues include asparagine 37 and histidine 122. Tyrosine 159 serves as the catalytic Proton donor/acceptor. A Mg(2+)-binding site is contributed by aspartate 212. Histidine 214 functions as the Proton donor/acceptor in the catalytic mechanism. The Mg(2+) site is built by glutamate 238 and glutamate 264. 5 residues coordinate substrate: glutamate 264, arginine 285, histidine 314, aspartate 318, and glutamate 341.

The protein belongs to the mandelate racemase/muconate lactonizing enzyme family. GalD subfamily. Mg(2+) is required as a cofactor.

The enzyme catalyses D-mannonate = 2-dehydro-3-deoxy-D-gluconate + H2O. Functionally, has low D-mannonate dehydratase activity (in vitro), suggesting that this is not a physiological substrate and that it has no significant role in D-mannonate degradation in vivo. Has no detectable activity with a panel of 70 other acid sugars (in vitro). The sequence is that of D-galactonate dehydratase family member Ent638_1932 from Enterobacter sp. (strain 638).